We begin with the raw amino-acid sequence, 201 residues long: Pyridoxal 5'-phosphate synthase subunit PdxT (201 aa).

An L-glutamine-binding site is contributed by 49–51 (GES). Cysteine 81 acts as the Nucleophile in catalysis. Residues arginine 110 and 139-140 (IR) each bind L-glutamine. Active-site charge relay system residues include histidine 180 and glutamate 182.

This sequence belongs to the glutaminase PdxT/SNO family. In the presence of PdxS, forms a dodecamer of heterodimers. Only shows activity in the heterodimer.

The enzyme catalyses aldehydo-D-ribose 5-phosphate + D-glyceraldehyde 3-phosphate + L-glutamine = pyridoxal 5'-phosphate + L-glutamate + phosphate + 3 H2O + H(+). It carries out the reaction L-glutamine + H2O = L-glutamate + NH4(+). It participates in cofactor biosynthesis; pyridoxal 5'-phosphate biosynthesis. In terms of biological role, catalyzes the hydrolysis of glutamine to glutamate and ammonia as part of the biosynthesis of pyridoxal 5'-phosphate. The resulting ammonia molecule is channeled to the active site of PdxS. The sequence is that of Pyridoxal 5'-phosphate synthase subunit PdxT from Salinispora tropica (strain ATCC BAA-916 / DSM 44818 / JCM 13857 / NBRC 105044 / CNB-440).